Here is a 285-residue protein sequence, read N- to C-terminus: MTAQIIDGKAIATTITERVAKGVKLRIANGLRAPGLAVILVGGDPASQIYVGSKRRTCEAVGIHSKAFDLPETTTQDELLALIDKLNDDPDIDGILVQFPLPDGFDQTSVIERIKPDKDVDGFHPYNVGRLAQRIPLLRSCTPRGIISMLEYIGTEFHGKHAVVVGASNIVGRPMTLELLLAGCTTTTCHRFTTDLAHYVKQADILVVARGKANFIPGEWIKKGATVLDVGINRLEDGSLAGDVDFAGAKERAAWISPVPGGVGPMTVATLIENTLFACNEFHSQ.

NADP(+) is bound by residues 166–168 (GAS) and isoleucine 232.

This sequence belongs to the tetrahydrofolate dehydrogenase/cyclohydrolase family. Homodimer.

The catalysed reaction is (6R)-5,10-methylene-5,6,7,8-tetrahydrofolate + NADP(+) = (6R)-5,10-methenyltetrahydrofolate + NADPH. It carries out the reaction (6R)-5,10-methenyltetrahydrofolate + H2O = (6R)-10-formyltetrahydrofolate + H(+). It participates in one-carbon metabolism; tetrahydrofolate interconversion. Its function is as follows. Catalyzes the oxidation of 5,10-methylenetetrahydrofolate to 5,10-methenyltetrahydrofolate and then the hydrolysis of 5,10-methenyltetrahydrofolate to 10-formyltetrahydrofolate. This Psychromonas ingrahamii (strain DSM 17664 / CCUG 51855 / 37) protein is Bifunctional protein FolD.